Consider the following 468-residue polypeptide: Cytochrome bd ubiquinol oxidase subunit 1 (468 aa).

The next 9 membrane-spanning stretches (helical) occupy residues 15 to 35, 51 to 71, 95 to 115, 124 to 144, 177 to 197, 219 to 239, 331 to 351, 366 to 386, and 416 to 436; these read TLFH…VALM, AKFW…TGIL, LAIE…LWIF, IHAL…FWIL, LWVE…FFIA, LAMI…HMQA, FRIM…GLWL, IMIA…IMTE, and SIIA…FLFI. Residue His18 participates in heme b binding. His183 lines the heme b pocket. Met334 is a binding site for heme b. A disordered region spans residues 448-468; the sequence is HHDVPVSTDPFSQEVYHGISS.

It belongs to the cytochrome ubiquinol oxidase subunit 1 family. In terms of assembly, heterodimer of subunits I and II. The cofactor is heme b. Requires heme d cis-diol as cofactor.

It localises to the cell membrane. It carries out the reaction 2 a ubiquinol + O2(in) + 4 H(+)(in) = 2 a ubiquinone + 2 H2O(in) + 4 H(+)(out). This chain is Cytochrome bd ubiquinol oxidase subunit 1 (cydA), found in Bacillus subtilis (strain 168).